Reading from the N-terminus, the 28-residue chain is Odorant-binding protein 1 (28 aa).

This sequence belongs to the calycin superfamily. Lipocalin family. In terms of tissue distribution, nasal mucosa.

The protein resides in the secreted. It localises to the extracellular space. In terms of biological role, this soluble protein may play a specific role in odor discrimination and perception. This is Odorant-binding protein 1 from Hystrix cristata (North African crested porcupine).